The following is a 564-amino-acid chain: Proline--tRNA ligase (564 aa).

Belongs to the class-II aminoacyl-tRNA synthetase family. ProS type 1 subfamily. As to quaternary structure, homodimer.

Its subcellular location is the cytoplasm. It catalyses the reaction tRNA(Pro) + L-proline + ATP = L-prolyl-tRNA(Pro) + AMP + diphosphate. Its function is as follows. Catalyzes the attachment of proline to tRNA(Pro) in a two-step reaction: proline is first activated by ATP to form Pro-AMP and then transferred to the acceptor end of tRNA(Pro). As ProRS can inadvertently accommodate and process non-cognate amino acids such as alanine and cysteine, to avoid such errors it has two additional distinct editing activities against alanine. One activity is designated as 'pretransfer' editing and involves the tRNA(Pro)-independent hydrolysis of activated Ala-AMP. The other activity is designated 'posttransfer' editing and involves deacylation of mischarged Ala-tRNA(Pro). The misacylated Cys-tRNA(Pro) is not edited by ProRS. The polypeptide is Proline--tRNA ligase (Xylella fastidiosa (strain M12)).